Consider the following 226-residue polypeptide: Probable chemoreceptor glutamine deamidase CheD (226 aa).

Residues 207–226 (PGGMRVERFDTPSRRDPVGA) form a disordered region.

It belongs to the CheD family.

The enzyme catalyses L-glutaminyl-[protein] + H2O = L-glutamyl-[protein] + NH4(+). Functionally, probably deamidates glutamine residues to glutamate on methyl-accepting chemotaxis receptors (MCPs), playing an important role in chemotaxis. In Bordetella bronchiseptica (strain ATCC BAA-588 / NCTC 13252 / RB50) (Alcaligenes bronchisepticus), this protein is Probable chemoreceptor glutamine deamidase CheD.